Reading from the N-terminus, the 401-residue chain is Tumor necrosis factor receptor superfamily member 11B (401 aa).

Residues 1-21 (MNNLLCCALVFLDISIKWTTQ) form the signal peptide. TNFR-Cys repeat units lie at residues 24–62 (FPPKYLHYDEETSHQLLCDKCPPGTYLKQHCTAKWKTVC), 65–105 (CPDH…NRVC), 107–142 (CKEGRYLEIEFCLKHRSCPPGFGVVQAGTPERNTVC), and 145–185 (CPDG…DNIC). Intrachain disulfides connect Cys-41–Cys-54, Cys-44–Cys-62, Cys-65–Cys-80, Cys-83–Cys-97, Cys-87–Cys-105, Cys-107–Cys-118, Cys-124–Cys-142, and Cys-145–Cys-160. N-linked (GlcNAc...) asparagine glycosylation is present at Asn-98. N-linked (GlcNAc...) asparagine glycosylation is found at Asn-152, Asn-165, and Asn-178. Residues Cys-166 and Cys-185 are joined by a disulfide bond. Death domains follow at residues 198–269 (DVTL…IVKK) and 270–365 (IIQD…TQSL). Asn-289 carries N-linked (GlcNAc...) asparagine glycosylation.

As to quaternary structure, homodimer. Interacts with TNFSF10 and TNFSF11. N-glycosylated. Contains sialic acid residues. In terms of processing, the N-terminus is blocked. Highly expressed in adult lung, heart, kidney, liver, spleen, thymus, prostate, ovary, small intestine, thyroid, lymph node, trachea, adrenal gland, testis, and bone marrow. Detected at very low levels in brain, placenta and skeletal muscle. Highly expressed in fetal kidney, liver and lung.

Its subcellular location is the secreted. Acts as a decoy receptor for TNFSF11/RANKL and thereby neutralizes its function in osteoclastogenesis. Inhibits the activation of osteoclasts and promotes osteoclast apoptosis in vitro. Bone homeostasis seems to depend on the local ratio between TNFSF11 and TNFRSF11B. May also play a role in preventing arterial calcification. May act as decoy receptor for TNFSF10/TRAIL and protect against apoptosis. TNFSF10/TRAIL binding blocks the inhibition of osteoclastogenesis. This chain is Tumor necrosis factor receptor superfamily member 11B (TNFRSF11B), found in Homo sapiens (Human).